The primary structure comprises 881 residues: Formin-like protein 10 (881 aa).

Residues M1–G24 form the signal peptide. Residues L194–P223 form a disordered region. Residues V236–F256 traverse the membrane as a helical segment. The span at T333–S346 shows a compositional bias: polar residues. 3 disordered regions span residues T333–A427, E683–Q703, and A837–D881. Residues L351 to P390 show a composition bias toward pro residues. Over residues L400–E424 the composition is skewed to low complexity. The FH2 domain maps to E422–N854. The span at S692–S701 shows a compositional bias: polar residues. Residues S846 to Q865 show a composition bias toward low complexity. Basic and acidic residues predominate over residues L870–D881.

It belongs to the formin-like family. Class-I subfamily.

Its subcellular location is the membrane. This is Formin-like protein 10 (FH10) from Oryza sativa subsp. japonica (Rice).